Consider the following 110-residue polypeptide: Nucleoid-associated protein YpAngola_A2890 (110 aa).

Positions 90–110 are disordered; the sequence is KEKMASVSNGMQLPPGFKMPF.

The protein belongs to the YbaB/EbfC family. Homodimer.

It localises to the cytoplasm. The protein resides in the nucleoid. In terms of biological role, binds to DNA and alters its conformation. May be involved in regulation of gene expression, nucleoid organization and DNA protection. In Yersinia pestis bv. Antiqua (strain Angola), this protein is Nucleoid-associated protein YpAngola_A2890.